The following is an 898-amino-acid chain: Phosphoenolpyruvate carboxylase (898 aa).

Catalysis depends on residues histidine 138 and lysine 561.

The protein belongs to the PEPCase type 1 family. It depends on Mg(2+) as a cofactor.

It carries out the reaction oxaloacetate + phosphate = phosphoenolpyruvate + hydrogencarbonate. Functionally, forms oxaloacetate, a four-carbon dicarboxylic acid source for the tricarboxylic acid cycle. This chain is Phosphoenolpyruvate carboxylase, found in Streptococcus pneumoniae serotype 4 (strain ATCC BAA-334 / TIGR4).